Here is a 203-residue protein sequence, read N- to C-terminus: Small ribosomal subunit protein uS4 (203 aa).

Residues 93–156 (RRLDNVVYRL…MKVPAILEAV (64 aa)) form the S4 RNA-binding domain.

It belongs to the universal ribosomal protein uS4 family. Part of the 30S ribosomal subunit. Contacts protein S5. The interaction surface between S4 and S5 is involved in control of translational fidelity.

Its function is as follows. One of the primary rRNA binding proteins, it binds directly to 16S rRNA where it nucleates assembly of the body of the 30S subunit. In terms of biological role, with S5 and S12 plays an important role in translational accuracy. The sequence is that of Small ribosomal subunit protein uS4 from Streptococcus pyogenes serotype M1.